The primary structure comprises 182 residues: MGFKGTTVIAIKKNGKTVVAADGQVTFGHTVLKSNAIKIRKLLNGKILAGFAGSTSDAITLFEKFEEKIKAKGDGLVDIKRAAVDLAKDWRSDKILHKLEAMMLVADSKNILLISGTGDVVEPEEDVVSIGSGGNYAYSAALAYMENKKLSAFEVALRSLKIAARVCIYTNSNIVLEEIENE.

Threonine 6 is a catalytic residue. Na(+) contacts are provided by alanine 164, cysteine 167, and threonine 170.

It belongs to the peptidase T1B family. HslV subfamily. A double ring-shaped homohexamer of HslV is capped on each side by a ring-shaped HslU homohexamer. The assembly of the HslU/HslV complex is dependent on binding of ATP.

The protein localises to the cytoplasm. It catalyses the reaction ATP-dependent cleavage of peptide bonds with broad specificity.. Its activity is regulated as follows. Allosterically activated by HslU binding. Functionally, protease subunit of a proteasome-like degradation complex believed to be a general protein degrading machinery. This is ATP-dependent protease subunit HslV from Borreliella afzelii (strain PKo) (Borrelia afzelii).